The primary structure comprises 466 residues: Asparagine--tRNA ligase (466 aa).

It belongs to the class-II aminoacyl-tRNA synthetase family. Homodimer.

The protein localises to the cytoplasm. It catalyses the reaction tRNA(Asn) + L-asparagine + ATP = L-asparaginyl-tRNA(Asn) + AMP + diphosphate + H(+). In Xylella fastidiosa (strain Temecula1 / ATCC 700964), this protein is Asparagine--tRNA ligase.